Reading from the N-terminus, the 214-residue chain is Phosphoenolpyruvate guanylyltransferase (214 aa).

The phosphoenolpyruvate site is built by Thr-148, Gly-163, and Ser-166.

The protein belongs to the CofC family.

It carries out the reaction phosphoenolpyruvate + GTP + H(+) = enolpyruvoyl-2-diphospho-5'-guanosine + diphosphate. The protein operates within cofactor biosynthesis; coenzyme F420 biosynthesis. Functionally, guanylyltransferase that catalyzes the activation of phosphoenolpyruvate (PEP) as enolpyruvoyl-2-diphospho-5'-guanosine, via the condensation of PEP with GTP. It is involved in the biosynthesis of coenzyme F420, a hydride carrier cofactor. This chain is Phosphoenolpyruvate guanylyltransferase, found in Mycobacterium tuberculosis (strain KZN 1435 / MDR).